A 741-amino-acid chain; its full sequence is MEQTYQYAWIIPFLPLPVPMLIGLGLLLFPTATKSLRRMWAFQSVLLLSIVMIFSMNLSIQQINSSSVYQYVWSWIINNDFSLEFGYLIDPLTSIMSILITTVGIMVLIYSDNYMSHDHGYLRFFAYMSFFSTSMLGLVTSSNLIQIYIFWELVGMCSYLLIGFWFTRPVAAKACQKAFVTNRVGDFGLLLGILGFYWITGSFEFRDLFQIFNNLISNNEVNFLFVTLCAVLLFAGAIAKSAQFPLHVWLPDAMEGPTPISALIHAATMVAAGIFLVARLMPLFIVIPHIMNFISLIGIITVFLGATLALAQKDIKRGLAYSTMSQLGYMMLALGMGSYRSALFHLITHAYSKALLFLGSGSVIHSMETLVGYCPKKSQNMVLMGGLTKHVPITKNSFLLGTLSLCGIPPLACFWSKDEILNDSWLYSPIFAIIAWSTAGLTAFYMCRIYLLTFEGHLNVHFQNYSGKRNTPLYSISLWGKEGSKISNKNFRLVTLLKMKKNGRPSFFSNKVYKMDENVRNLIQPFLSIPNFGNTKTSLYPYESDNTMLFPILILILFTLFVGFLGIPFNQDVDILSKWLTPSINLLHKNSNNSIDWYEFCKDAVFSVSIASFGIFIAFFLYKPVYSSFQNLDLINSFVKIGPKRIFSDKIKKAIYDWSYNRGYIDAFDGTFLTVGMRKLAEFTHFFDRRIIDGIPNGVGLMSFFVAEVIKSVGGGRISSYLFFYFSYVSIFLLIYYFLNY.

16 consecutive transmembrane segments (helical) span residues 9-29, 40-60, 89-109, 125-145, 147-167, 185-205, 219-239, 258-278, 283-303, 327-347, 354-374, 396-416, 425-445, 549-569, 605-625, and 718-738; these read WIIPFLPLPVPMLIGLGLLLF, WAFQSVLLLSIVMIFSMNLSI, IDPLTSIMSILITTVGIMVLI, FAYMSFFSTSMLGLVTSSNLI, IYIFWELVGMCSYLLIGFWFT, GDFGLLLGILGFYWITGSFEF, NEVNFLFVTLCAVLLFAGAIA, TPISALIHAATMVAAGIFLVA, LFIVIPHIMNFISLIGIITVF, LGYMMLALGMGSYRSALFHLI, ALLFLGSGSVIHSMETLVGYC, NSFLLGTLSLCGIPPLACFWS, WLYSPIFAIIAWSTAGLTAFY, LFPILILILFTLFVGFLGIPF, VFSVSIASFGIFIAFFLYKPV, and ISSYLFFYFSYVSIFLLIYYF.

This sequence belongs to the complex I subunit 5 family. In terms of assembly, NDH is composed of at least 16 different subunits, 5 of which are encoded in the nucleus.

The protein localises to the plastid. The protein resides in the chloroplast thylakoid membrane. The enzyme catalyses a plastoquinone + NADH + (n+1) H(+)(in) = a plastoquinol + NAD(+) + n H(+)(out). It carries out the reaction a plastoquinone + NADPH + (n+1) H(+)(in) = a plastoquinol + NADP(+) + n H(+)(out). In terms of biological role, NDH shuttles electrons from NAD(P)H:plastoquinone, via FMN and iron-sulfur (Fe-S) centers, to quinones in the photosynthetic chain and possibly in a chloroplast respiratory chain. The immediate electron acceptor for the enzyme in this species is believed to be plastoquinone. Couples the redox reaction to proton translocation, and thus conserves the redox energy in a proton gradient. This Athroisma gracile protein is NAD(P)H-quinone oxidoreductase subunit 5, chloroplastic (ndhF).